The sequence spans 310 residues: N-acetyl-gamma-glutamyl-phosphate reductase (310 aa).

The active site involves Cys117.

It belongs to the NAGSA dehydrogenase family. Type 2 subfamily.

It is found in the cytoplasm. The enzyme catalyses N-acetyl-L-glutamate 5-semialdehyde + phosphate + NADP(+) = N-acetyl-L-glutamyl 5-phosphate + NADPH + H(+). The protein operates within amino-acid biosynthesis; L-arginine biosynthesis; N(2)-acetyl-L-ornithine from L-glutamate: step 3/4. Catalyzes the NADPH-dependent reduction of N-acetyl-5-glutamyl phosphate to yield N-acetyl-L-glutamate 5-semialdehyde. This is N-acetyl-gamma-glutamyl-phosphate reductase from Sinorhizobium medicae (strain WSM419) (Ensifer medicae).